Consider the following 207-residue polypeptide: dTTP/UTP pyrophosphatase (207 aa).

Residue Asp79 is the Proton acceptor of the active site.

This sequence belongs to the Maf family. YhdE subfamily. It depends on a divalent metal cation as a cofactor.

It localises to the cytoplasm. The enzyme catalyses dTTP + H2O = dTMP + diphosphate + H(+). It carries out the reaction UTP + H2O = UMP + diphosphate + H(+). In terms of biological role, nucleoside triphosphate pyrophosphatase that hydrolyzes dTTP and UTP. May have a dual role in cell division arrest and in preventing the incorporation of modified nucleotides into cellular nucleic acids. The chain is dTTP/UTP pyrophosphatase from Rhodopseudomonas palustris (strain HaA2).